The primary structure comprises 618 residues: Putative UDP-glucuronate:xylan alpha-glucuronosyltransferase 3 (618 aa).

A helical; Signal-anchor for type II membrane protein transmembrane segment spans residues 32–54; the sequence is GVKFNTLKLVLICIMLGALFTIY. Mn(2+) is bound by residues aspartate 379 and aspartate 381. Residues 379–381, 408–410, 435–439, and 489–495 each bind substrate; these read DAD, NSG, NGGDQ, and HYLGYNK. Histidine 489 is a binding site for Mn(2+). The segment covering 598 to 608 has biased composition (low complexity); sequence TNNSSTTTTSS. Positions 598 to 618 are disordered; the sequence is TNNSSTTTTSSPPHKTALPSL.

It belongs to the glycosyltransferase 8 family. Glycogenin subfamily. The cofactor is Mn(2+).

It is found in the golgi apparatus membrane. Functionally, may be involved in the substitutions of the xylan backbone in stem glucuronoxylan. The protein is Putative UDP-glucuronate:xylan alpha-glucuronosyltransferase 3 (GUX3) of Arabidopsis thaliana (Mouse-ear cress).